The following is a 397-amino-acid chain: LIM/homeobox protein Lhx9 (397 aa).

Residues Arg-40–Met-60 are disordered. LIM zinc-binding domains are found at residues Ala-69–Val-130 and Gln-131–Gly-193. A DNA-binding region (homeobox) is located at residues Thr-267–Leu-326. Disordered regions lie at residues Glu-330–Thr-363 and Ser-378–Phe-397. Positions Leu-353–Thr-363 are enriched in low complexity. Over residues Ser-387 to Phe-397 the composition is skewed to polar residues.

Its subcellular location is the nucleus. In terms of biological role, may be involved in gonadal development. This Gallus gallus (Chicken) protein is LIM/homeobox protein Lhx9 (LHX9).